The chain runs to 237 residues: Ribosomal RNA large subunit methyltransferase E (237 aa).

S-adenosyl-L-methionine is bound by residues Gly-80, Trp-82, Asp-108, Asp-124, and Asp-148. Residue Lys-188 is the Proton acceptor of the active site.

Belongs to the class I-like SAM-binding methyltransferase superfamily. RNA methyltransferase RlmE family.

It localises to the cytoplasm. It carries out the reaction uridine(2552) in 23S rRNA + S-adenosyl-L-methionine = 2'-O-methyluridine(2552) in 23S rRNA + S-adenosyl-L-homocysteine + H(+). In terms of biological role, specifically methylates the uridine in position 2552 of 23S rRNA at the 2'-O position of the ribose in the fully assembled 50S ribosomal subunit. The chain is Ribosomal RNA large subunit methyltransferase E from Jannaschia sp. (strain CCS1).